The chain runs to 185 residues: Ion-translocating oxidoreductase complex subunit B (185 aa).

Positions 1–26 (MNHILLIILIFAALALIFGLLLGFAA) are hydrophobic. Residues 32-90 (ESDPIVDQLDALLPQTQCGQCGYPGCRPYAEAIANGDSINKCVPGGAQTIQNIADLMGV) form the 4Fe-4S domain. [4Fe-4S] cluster contacts are provided by C49, C52, C57, C73, C115, C118, C121, C125, C145, C148, C151, and C155. 2 4Fe-4S ferredoxin-type domains span residues 106 to 135 (RVAF…GAPK) and 136 to 165 (LMHT…MIEL).

It belongs to the 4Fe4S bacterial-type ferredoxin family. RnfB subfamily. In terms of assembly, the complex is composed of six subunits: RnfA, RnfB, RnfC, RnfD, RnfE and RnfG. The cofactor is [4Fe-4S] cluster.

The protein localises to the cell inner membrane. In terms of biological role, part of a membrane-bound complex that couples electron transfer with translocation of ions across the membrane. This chain is Ion-translocating oxidoreductase complex subunit B, found in Tolumonas auensis (strain DSM 9187 / NBRC 110442 / TA 4).